The chain runs to 1366 residues: DNA-directed RNA polymerase subunit beta (1366 aa).

This sequence belongs to the RNA polymerase beta chain family. In terms of assembly, the RNAP catalytic core consists of 2 alpha, 1 beta, 1 beta' and 1 omega subunit. When a sigma factor is associated with the core the holoenzyme is formed, which can initiate transcription.

It catalyses the reaction RNA(n) + a ribonucleoside 5'-triphosphate = RNA(n+1) + diphosphate. DNA-dependent RNA polymerase catalyzes the transcription of DNA into RNA using the four ribonucleoside triphosphates as substrates. In Polynucleobacter asymbioticus (strain DSM 18221 / CIP 109841 / QLW-P1DMWA-1) (Polynucleobacter necessarius subsp. asymbioticus), this protein is DNA-directed RNA polymerase subunit beta.